A 134-amino-acid polypeptide reads, in one-letter code: Small ribosomal subunit protein uS11 (134 aa).

Belongs to the universal ribosomal protein uS11 family. As to quaternary structure, part of the 30S ribosomal subunit. Interacts with proteins S7 and S18. Binds to IF-3.

Functionally, located on the platform of the 30S subunit, it bridges several disparate RNA helices of the 16S rRNA. Forms part of the Shine-Dalgarno cleft in the 70S ribosome. In Paraburkholderia xenovorans (strain LB400), this protein is Small ribosomal subunit protein uS11.